The sequence spans 256 residues: Putative F-box protein At3g51171 (256 aa).

Residues 1-44 (MVPLPWELEEDILSRLAAQSLVRFRSVCKRWNYLFDEKSFIKNH) enclose the F-box domain.

The protein is Putative F-box protein At3g51171 of Arabidopsis thaliana (Mouse-ear cress).